We begin with the raw amino-acid sequence, 193 residues long: dTTP/UTP pyrophosphatase (193 aa).

Asp-75 serves as the catalytic Proton acceptor.

Belongs to the Maf family. YhdE subfamily. Requires a divalent metal cation as cofactor.

It is found in the cytoplasm. The catalysed reaction is dTTP + H2O = dTMP + diphosphate + H(+). The enzyme catalyses UTP + H2O = UMP + diphosphate + H(+). Functionally, nucleoside triphosphate pyrophosphatase that hydrolyzes dTTP and UTP. May have a dual role in cell division arrest and in preventing the incorporation of modified nucleotides into cellular nucleic acids. This chain is dTTP/UTP pyrophosphatase, found in Koribacter versatilis (strain Ellin345).